The chain runs to 79 residues: Cytochrome c oxidase subunit 7A1, mitochondrial (79 aa).

The N-terminal 21 residues, 1–21 (MQALRVSRALIRSFNTTARNR), are a transit peptide targeting the mitochondrion. The Mitochondrial matrix portion of the chain corresponds to 22–46 (FQNRVPEKQKLFQEDNDIPLYLKGG). Residues 47–75 (IVDNILYRVTMGLCLGGSAYSMYCLGWAS) form a helical membrane-spanning segment. Over 76–79 (FPRN) the chain is Mitochondrial intermembrane.

This sequence belongs to the cytochrome c oxidase VIIa family. In terms of assembly, component of the complex IV (CIV, cytochrome c oxidase), a multisubunit enzyme composed of 14 subunits. The complex is composed of a catalytic core of 3 subunits MT-CO1, MT-CO2 and MT-CO3, encoded in the mitochondrial DNA, and 11 supernumerary subunits COX4I1 (or COX4I2), COX5A, COX5B, COX6A2 (or COX6A1), COX6B1 (or COX6B2), COX6C, COX7A1 (or COX7A2), COX7B, COX7C, COX8B and NDUFA4, which are encoded in the nuclear genome. The complex exists as a monomer or a dimer and forms supercomplexes (SCs) in the inner mitochondrial membrane with NADH-ubiquinone oxidoreductase (complex I, CI) and ubiquinol-cytochrome c oxidoreductase (cytochrome b-c1 complex, complex III, CIII), resulting in different assemblies (supercomplex SCI(1)III(2)IV(1) and megacomplex MCI(2)III(2)IV(2)).

It localises to the mitochondrion inner membrane. The protein operates within energy metabolism; oxidative phosphorylation. Its function is as follows. Component of the mitochondrial respiratory complex IV (CIV, also named cytochrome c oxidase complex), the last enzyme in the mitochondrial electron transport chain which drives oxidative phosphorylation. The CIV complex is the component of the respiratory chain that catalyzes the reduction of oxygen to water. Acts as an assembly factor that specifically drives the homodimerization of CIV complexes, mediating the formation of mitochondrial respiratory supercomplexes (respirasomes) containing two CIV: supercomplxes with two molecules of CIV show improved activity. Despite being highly expressed in brown adipose tissue, not required for thermogenesis. This chain is Cytochrome c oxidase subunit 7A1, mitochondrial (COX7A1), found in Trachypithecus cristatus (Silvered leaf-monkey).